The following is a 246-amino-acid chain: Mast cell protease 4 (246 aa).

The signal sequence occupies residues 1–18; it reads MQALLFLMALLLPSGAGA. Positions 19–20 are cleaved as a propeptide — activation peptide; the sequence is EE. The 224-residue stretch at 21 to 244 folds into the Peptidase S1 domain; sequence IIGGVESRPH…YVPWINRVIK (224 aa). A disulfide bridge links Cys50 with Cys66. Catalysis depends on charge relay system residues His65 and Asp109. 2 disulfide bridges follow: Cys143-Cys208 and Cys174-Cys187. The active-site Charge relay system is Ser202.

It belongs to the peptidase S1 family. Granzyme subfamily. As to quaternary structure, monomer. Interacts with iripin-2, a serine protease inhibitor from Ixodes ricinus saliva. As to expression, submucosal mast cells. In femoral muscle, detected in myocytes but not in mast cells.

Completely inhibited by serine protease inhibitors such as chymostatin, diisopropylfluorophosphate and phenylmethylsulfonyl fluoride, but not by p-tosyl-L-phenylalanine chloromethyl ketone, p-tosyl-L-lysine chloromethyl ketone, pepstatin, E-64, EDTA or o-phenanthroline. Also inhibited by lima bean trypsin inhibitor, soy bean trypsin inhibitor and human plasma alpha1-antichymotrypsin. Has chymotrypsin-like activity. Hydrolyzes the amide bonds of synthetic substrates having Tyr and Phe residues at the P1 position. Preferentially hydrolyzes the 'Tyr-4-|-Ile-5' bond of angiotensin I and the 'Phe-20-|-Ala-21' bond of amyloid beta-protein, and is less active towards the 'Phe-8-|-His-9' bond of angiotensin I and the 'Phe-4-|-Ala-5' and 'Tyr-10-|-Glu-11' bonds of amyloid beta-protein. Involved in thrombin regulation and fibronectin processing. This is Mast cell protease 4 (Mcpt4) from Mus musculus (Mouse).